The chain runs to 542 residues: Cytochrome P450 monooxygenase 91 (542 aa).

A signal peptide spans 1 to 22 (MLDILRFVLICGILWILRRVLL). N-linked (GlcNAc...) asparagine glycans are attached at residues asparagine 299 and asparagine 392. Cysteine 482 lines the heme pocket.

This sequence belongs to the cytochrome P450 family. Heme serves as cofactor.

It functions in the pathway secondary metabolite biosynthesis. In terms of biological role, cytochrome P450 monooxygenase that is able to use dehydroabietic acid as a substrate for oxidation. This is Cytochrome P450 monooxygenase 91 from Postia placenta (strain ATCC 44394 / Madison 698-R) (Brown rot fungus).